The following is a 136-amino-acid chain: Small ribosomal subunit protein eS19 (136 aa).

K23 is subject to N6-acetyllysine. R67 bears the Omega-N-methylarginine mark. 2 positions are modified to N6-acetyllysine: K111 and K115. A disordered region spans residues D116–G136.

It belongs to the eukaryotic ribosomal protein eS19 family. In terms of assembly, component of the small ribosomal subunit. Part of the small subunit (SSU) processome, composed of more than 70 proteins and the RNA chaperone small nucleolar RNA (snoRNA) U3. Interacts with RPS19BP1; the interaction is direct and mediates the integration of RPS19 in state post-A1. Interacts with RPS19BP1.

It is found in the cytoplasm. The protein localises to the nucleus. The protein resides in the nucleolus. In terms of biological role, component of the small ribosomal subunit. The ribosome is a large ribonucleoprotein complex responsible for the synthesis of proteins in the cell. Required for pre-rRNA processing and maturation of 40S ribosomal subunits. Part of the small subunit (SSU) processome, first precursor of the small eukaryotic ribosomal subunit. During the assembly of the SSU processome in the nucleolus, many ribosome biogenesis factors, an RNA chaperone and ribosomal proteins associate with the nascent pre-rRNA and work in concert to generate RNA folding, modifications, rearrangements and cleavage as well as targeted degradation of pre-ribosomal RNA by the RNA exosome. The protein is Small ribosomal subunit protein eS19 (RPS19) of Sus scrofa (Pig).